A 149-amino-acid chain; its full sequence is Large ribosomal subunit protein bL9 (149 aa).

It belongs to the bacterial ribosomal protein bL9 family.

Its function is as follows. Binds to the 23S rRNA. The polypeptide is Large ribosomal subunit protein bL9 (Stenotrophomonas maltophilia (strain K279a)).